The chain runs to 307 residues: Ribosomal RNA small subunit methyltransferase H (307 aa).

Residues 33-35, Asp-52, Leu-83, Asp-97, and Gln-104 each bind S-adenosyl-L-methionine; that span reads AGH.

It belongs to the methyltransferase superfamily. RsmH family.

Its subcellular location is the cytoplasm. The enzyme catalyses cytidine(1402) in 16S rRNA + S-adenosyl-L-methionine = N(4)-methylcytidine(1402) in 16S rRNA + S-adenosyl-L-homocysteine + H(+). Its function is as follows. Specifically methylates the N4 position of cytidine in position 1402 (C1402) of 16S rRNA. The chain is Ribosomal RNA small subunit methyltransferase H from Sulfurovum sp. (strain NBC37-1).